The chain runs to 408 residues: LL-diaminopimelate aminotransferase (408 aa).

2 residues coordinate substrate: Tyr15 and Gly42. Residues Tyr72, 108 to 109, Tyr132, Asn187, Tyr218, and 246 to 248 each bind pyridoxal 5'-phosphate; these read SK and SFS. The substrate site is built by Lys109, Tyr132, and Asn187. Lys249 bears the N6-(pyridoxal phosphate)lysine mark. Residues Arg257 and Asn292 each coordinate pyridoxal 5'-phosphate. Residues Asn292 and Arg388 each contribute to the substrate site.

The protein belongs to the class-I pyridoxal-phosphate-dependent aminotransferase family. LL-diaminopimelate aminotransferase subfamily. Homodimer. It depends on pyridoxal 5'-phosphate as a cofactor.

It catalyses the reaction (2S,6S)-2,6-diaminopimelate + 2-oxoglutarate = (S)-2,3,4,5-tetrahydrodipicolinate + L-glutamate + H2O + H(+). The protein operates within amino-acid biosynthesis; L-lysine biosynthesis via DAP pathway; LL-2,6-diaminopimelate from (S)-tetrahydrodipicolinate (aminotransferase route): step 1/1. Its function is as follows. Involved in the synthesis of meso-diaminopimelate (m-DAP or DL-DAP), required for both lysine and peptidoglycan biosynthesis. Catalyzes the direct conversion of tetrahydrodipicolinate to LL-diaminopimelate. The chain is LL-diaminopimelate aminotransferase from Synechococcus sp. (strain RCC307).